Consider the following 467-residue polypeptide: UDP-N-acetylmuramoylalanine--D-glutamate ligase (467 aa).

Position 115–121 (G115–T121) interacts with ATP.

The protein belongs to the MurCDEF family.

The protein resides in the cytoplasm. It carries out the reaction UDP-N-acetyl-alpha-D-muramoyl-L-alanine + D-glutamate + ATP = UDP-N-acetyl-alpha-D-muramoyl-L-alanyl-D-glutamate + ADP + phosphate + H(+). It participates in cell wall biogenesis; peptidoglycan biosynthesis. Cell wall formation. Catalyzes the addition of glutamate to the nucleotide precursor UDP-N-acetylmuramoyl-L-alanine (UMA). The sequence is that of UDP-N-acetylmuramoylalanine--D-glutamate ligase from Chlorobaculum parvum (strain DSM 263 / NCIMB 8327) (Chlorobium vibrioforme subsp. thiosulfatophilum).